The primary structure comprises 245 residues: 1-(5-phosphoribosyl)-5-[(5-phosphoribosylamino)methylideneamino] imidazole-4-carboxamide isomerase (245 aa).

Asp8 acts as the Proton acceptor in catalysis. Asp130 acts as the Proton donor in catalysis.

Belongs to the HisA/HisF family.

The protein localises to the cytoplasm. The enzyme catalyses 1-(5-phospho-beta-D-ribosyl)-5-[(5-phospho-beta-D-ribosylamino)methylideneamino]imidazole-4-carboxamide = 5-[(5-phospho-1-deoxy-D-ribulos-1-ylimino)methylamino]-1-(5-phospho-beta-D-ribosyl)imidazole-4-carboxamide. It participates in amino-acid biosynthesis; L-histidine biosynthesis; L-histidine from 5-phospho-alpha-D-ribose 1-diphosphate: step 4/9. This chain is 1-(5-phosphoribosyl)-5-[(5-phosphoribosylamino)methylideneamino] imidazole-4-carboxamide isomerase, found in Pseudomonas fluorescens (strain ATCC BAA-477 / NRRL B-23932 / Pf-5).